Consider the following 882-residue polypeptide: DNA mismatch repair protein MutS (882 aa).

ATP is bound at residue G629–S636.

It belongs to the DNA mismatch repair MutS family.

Its function is as follows. This protein is involved in the repair of mismatches in DNA. It is possible that it carries out the mismatch recognition step. This protein has a weak ATPase activity. This chain is DNA mismatch repair protein MutS, found in Ralstonia pickettii (strain 12J).